Here is a 468-residue protein sequence, read N- to C-terminus: MSQDTLFDKVWDLHKVSSLPGGSDQIFIGLHLIHEVTSPQAFGALKDKNLKVKFPERTVATVDHIVPTDNQSRPFKDNLAEQMIETLEKNCLDHNIRFFNIGSGNQGIVHVVAPELGLTQPGMTIACGDSHTSTHGAFGSIAFGIGTSQVRDVLASQTIAMNKLKVRQIWCDNKLSKGVYAKDLVLHIINELGVKAGVGFAYEFAGPAIDDLSMEERMTICNMSIEGGARCGYINPDEKTFSYIKNKLCAPKNEHWDKALKWWKSLKSDENSIYDDVVKLNASEVEPTVTWGITPGQSISINQQIPLLDDLSPNDKLVAKEAYEYMSFKPGQLIKDTPVDVCFIGSCTNGRISDLRVAAQVLKDKKVSKNVKAFVVPGSEKVATEAKQEGIDQIFKDSGFQWREPGCSMCLAMNSDKLIGNQVSASSSNRNFKGRQGSPSGRTLLMSPAMVAAAAINGKVSDVREFIN.

[4Fe-4S] cluster is bound by residues Cys347, Cys407, and Cys410. Polar residues predominate over residues 424 to 441 (SASSSNRNFKGRQGSPSG). A disordered region spans residues 424-443 (SASSSNRNFKGRQGSPSGRT).

The protein belongs to the aconitase/IPM isomerase family. LeuC type 1 subfamily. In terms of assembly, heterodimer of LeuC and LeuD. It depends on [4Fe-4S] cluster as a cofactor.

The catalysed reaction is (2R,3S)-3-isopropylmalate = (2S)-2-isopropylmalate. It functions in the pathway amino-acid biosynthesis; L-leucine biosynthesis; L-leucine from 3-methyl-2-oxobutanoate: step 2/4. Functionally, catalyzes the isomerization between 2-isopropylmalate and 3-isopropylmalate, via the formation of 2-isopropylmaleate. The polypeptide is 3-isopropylmalate dehydratase large subunit (Prochlorococcus marinus (strain MIT 9215)).